The primary structure comprises 113 residues: Hydrogenase maturation factor HypA 2 (113 aa).

H2 contacts Ni(2+). Residues C73, C76, C89, and C92 each coordinate Zn(2+).

It belongs to the HypA/HybF family.

In terms of biological role, involved in the maturation of [NiFe] hydrogenases. Required for nickel insertion into the metal center of the hydrogenase. The polypeptide is Hydrogenase maturation factor HypA 2 (Bradyrhizobium diazoefficiens (strain JCM 10833 / BCRC 13528 / IAM 13628 / NBRC 14792 / USDA 110)).